A 307-amino-acid polypeptide reads, in one-letter code: Ribosomal RNA small subunit methyltransferase H (307 aa).

S-adenosyl-L-methionine contacts are provided by residues 33–35, Asp51, Phe82, Asp96, and Gln103; that span reads GGY.

The protein belongs to the methyltransferase superfamily. RsmH family.

The protein resides in the cytoplasm. It carries out the reaction cytidine(1402) in 16S rRNA + S-adenosyl-L-methionine = N(4)-methylcytidine(1402) in 16S rRNA + S-adenosyl-L-homocysteine + H(+). Its function is as follows. Specifically methylates the N4 position of cytidine in position 1402 (C1402) of 16S rRNA. The chain is Ribosomal RNA small subunit methyltransferase H from Rickettsia peacockii (strain Rustic).